Reading from the N-terminus, the 81-residue chain is Serine protease inhibitor Kazal-type 2 (81 aa).

The first 21 residues, 1-21 (MALAVLRLALLLLAVTFAGPL), serve as a signal peptide directing secretion. The 55-residue stretch at 27-81 (KYKTPFCARYQLPGCPRDFNPVCGTDMITYPNECTLCMKIRESGQNIKILRRGPC) folds into the Kazal-like domain. 3 disulfides stabilise this stretch: cysteine 33/cysteine 63, cysteine 41/cysteine 60, and cysteine 49/cysteine 81.

In terms of tissue distribution, more abundant in epididymis than in testis.

Its subcellular location is the secreted. The protein resides in the cytoplasmic vesicle. The protein localises to the secretory vesicle. It localises to the acrosome. In terms of biological role, strong inhibitor of acrosin in male and/or female genital tract. Also inhibits trypsin. As a strong inhibitor of acrosin, it is required for normal spermiogenesis. It probably hinders premature activation of proacrosin and other proteases, thus preventing the cascade of events leading to spermiogenesis defects. May be involved in the regulation of serine protease-dependent germ cell apoptosis. It also inhibits trypsin. The polypeptide is Serine protease inhibitor Kazal-type 2 (SPINK2) (Macaca fascicularis (Crab-eating macaque)).